The following is a 503-amino-acid chain: 2-(3-amino-3-carboxypropyl)histidine synthase subunit 2 (503 aa).

Cys-93, Cys-114, and Cys-334 together coordinate [4Fe-4S] cluster. The segment at 464 to 503 is disordered; sequence GLDSVDEGEGPSKLYEGQSGIAKGYVGEGSKEKIQRDFGK. Basic and acidic residues predominate over residues 492–503; it reads GSKEKIQRDFGK.

Belongs to the DPH1/DPH2 family. DPH2 subfamily. As to quaternary structure, component of the 2-(3-amino-3-carboxypropyl)histidine synthase complex composed of dph1, dph2, dph3 and a NADH-dependent reductase, predominantly cbr1. [4Fe-4S] cluster is required as a cofactor.

Its subcellular location is the cytoplasm. It functions in the pathway protein modification; peptidyl-diphthamide biosynthesis. Its function is as follows. Required for the first step of diphthamide biosynthesis, a post-translational modification of histidine which occurs in elongation factor 2. Dph1 and dph2 transfer a 3-amino-3-carboxypropyl (ACP) group from S-adenosyl-L-methionine (SAM) to a histidine residue, the reaction is assisted by a reduction system comprising dph3 and a NADH-dependent reductase, predominantly cbr1. Facilitates the reduction of the catalytic iron-sulfur cluster found in the dph1 subunit. The sequence is that of 2-(3-amino-3-carboxypropyl)histidine synthase subunit 2 from Schizosaccharomyces pombe (strain 972 / ATCC 24843) (Fission yeast).